Reading from the N-terminus, the 82-residue chain is Small ribosomal subunit protein eS21z (82 aa).

Met-1 carries the N-acetylmethionine modification.

Belongs to the eukaryotic ribosomal protein eS21 family.

The protein is Small ribosomal subunit protein eS21z (RPS21B) of Arabidopsis thaliana (Mouse-ear cress).